A 314-amino-acid polypeptide reads, in one-letter code: Nodulation protein D 1 (314 aa).

The HTH lysR-type domain maps to 6–63; sequence LDLNLLVALDALMTERNLTAAARKIHLSQPAMSAAVARLRTYFGDELFTMRGRELVPT. Residues 23–42 constitute a DNA-binding region (H-T-H motif); the sequence is LTAAARKIHLSQPAMSAAVA.

The protein belongs to the LysR transcriptional regulatory family.

In terms of biological role, nodD regulates the expression of the nodABCFE genes which encode other nodulation proteins. NodD is also a negative regulator of its own expression. Binds flavonoids as inducers. In Bradyrhizobium sp. (strain NC92), this protein is Nodulation protein D 1 (nodD1).